A 198-amino-acid chain; its full sequence is Holliday junction resolvase RecU (198 aa).

4 residues coordinate Mg(2+): threonine 83, aspartate 85, glutamate 98, and glutamine 117.

It belongs to the RecU family. Mg(2+) is required as a cofactor.

It localises to the cytoplasm. The enzyme catalyses Endonucleolytic cleavage at a junction such as a reciprocal single-stranded crossover between two homologous DNA duplexes (Holliday junction).. Functionally, endonuclease that resolves Holliday junction intermediates in genetic recombination. Cleaves mobile four-strand junctions by introducing symmetrical nicks in paired strands. Promotes annealing of linear ssDNA with homologous dsDNA. Required for DNA repair, homologous recombination and chromosome segregation. The protein is Holliday junction resolvase RecU of Streptococcus thermophilus (strain CNRZ 1066).